The following is a 159-amino-acid chain: Putative pre-16S rRNA nuclease (159 aa).

This sequence belongs to the YqgF nuclease family.

The protein localises to the cytoplasm. Its function is as follows. Could be a nuclease involved in processing of the 5'-end of pre-16S rRNA. The chain is Putative pre-16S rRNA nuclease from Bartonella quintana (strain Toulouse) (Rochalimaea quintana).